The following is a 445-amino-acid chain: tRNA-2-methylthio-N(6)-dimethylallyladenosine synthase (445 aa).

Residues 3-124 (KKLYIKTYGC…LPELISKVVR (122 aa)) form the MTTase N-terminal domain. The [4Fe-4S] cluster site is built by cysteine 12, cysteine 48, cysteine 87, cysteine 162, cysteine 166, and cysteine 169. The region spanning 148 to 380 (YPQGASSFIS…QQELATQQLA (233 aa)) is the Radical SAM core domain. Positions 383–445 (QSCVGSTMRV…ALNSLTGEIL (63 aa)) constitute a TRAM domain.

It belongs to the methylthiotransferase family. MiaB subfamily. Monomer. It depends on [4Fe-4S] cluster as a cofactor.

It is found in the cytoplasm. The enzyme catalyses N(6)-dimethylallyladenosine(37) in tRNA + (sulfur carrier)-SH + AH2 + 2 S-adenosyl-L-methionine = 2-methylsulfanyl-N(6)-dimethylallyladenosine(37) in tRNA + (sulfur carrier)-H + 5'-deoxyadenosine + L-methionine + A + S-adenosyl-L-homocysteine + 2 H(+). In terms of biological role, catalyzes the methylthiolation of N6-(dimethylallyl)adenosine (i(6)A), leading to the formation of 2-methylthio-N6-(dimethylallyl)adenosine (ms(2)i(6)A) at position 37 in tRNAs that read codons beginning with uridine. This Rickettsia prowazekii (strain Madrid E) protein is tRNA-2-methylthio-N(6)-dimethylallyladenosine synthase.